Consider the following 693-residue polypeptide: MKEWRKNLFGREWLFQHGKVAKQSAGSIWARFGDSVVLATVNVSDNVVEGIDFVPLTVEFMEKFYAAGKIPGGFVKREGKPSESGILSSRLIDRPIRPLFPKNLRNEVQVIVTVLSVDPNCPTDVLGITAASLALNISRVPFDGIVAGVQIGYVDGQFIVFPTAEQLERSKIDIVVAGTKDAITMVEGEAKEVTEEEMLQALMTAHEAIKQIVAFQEEVIKEFNVEKMPLPEPKYNVELVEKFVEYIDMTELEKRIFARGKQERAEMADEYYESIVQKFFEDNNIPEEEQEEYAIPLKEKYDEISKKLMRKIIIERGLRADGRGPKDIRPITCEVGLLPRTHGSSLFTRGETQSLGIVTLGSPAEEQIIDTLIEEGTKRFILHYNFPPFSTGEVKPLRGPSRREIGHGHLAERAVKAIIPPEDEFPYVIRVVSEILESNGSSSMATVCSASLALMDAGVPTKKHVAGVAMGLILEEGKGVILTDIIGLEDHWGDMDFKVAGTKDGITAFQMDCKVSGVSEELLRQALYQAKEARMFILDKLYETISEPRKELSPYAPRISWFFIDPTRSGELIGPGGKTIKSIIKMFDVEISLDDSTGKVTVSGVDAEKVQEAVEYIQNMFRDISIGDLYTGKVTRVENYGIFVEIMPGKIGLVHSSKLGNVKPTSFKVGDKIKVEVINIDDAGRLQFRRLEE.

Asp-490 and Asp-496 together coordinate Mg(2+). Residues Pro-557–Ile-617 enclose the KH domain. Residues Gly-627–Leu-691 enclose the S1 motif domain.

This sequence belongs to the polyribonucleotide nucleotidyltransferase family. Mg(2+) is required as a cofactor.

Its subcellular location is the cytoplasm. The catalysed reaction is RNA(n+1) + phosphate = RNA(n) + a ribonucleoside 5'-diphosphate. Functionally, involved in mRNA degradation. Catalyzes the phosphorolysis of single-stranded polyribonucleotides processively in the 3'- to 5'-direction. This is Polyribonucleotide nucleotidyltransferase from Fervidobacterium nodosum (strain ATCC 35602 / DSM 5306 / Rt17-B1).